The sequence spans 329 residues: D-alanine--D-alanine ligase (329 aa).

Residues 121–327 (KLWYDALDIP…FSEFLAQCVT (207 aa)) enclose the ATP-grasp domain. 151–206 (AFGHWGSIFVKAARQGSSVGCYKVTTEDQIAPAIEAAFGFSEQVLVEQAVKPRELE) serves as a coordination point for ATP. Residues Asp-281, Glu-294, and Asn-296 each coordinate Mg(2+).

The protein belongs to the D-alanine--D-alanine ligase family. It depends on Mg(2+) as a cofactor. Requires Mn(2+) as cofactor.

The protein resides in the cytoplasm. It carries out the reaction 2 D-alanine + ATP = D-alanyl-D-alanine + ADP + phosphate + H(+). Its pathway is cell wall biogenesis; peptidoglycan biosynthesis. Its function is as follows. Cell wall formation. This Vibrio cholerae serotype O1 (strain ATCC 39541 / Classical Ogawa 395 / O395) protein is D-alanine--D-alanine ligase.